Here is a 161-residue protein sequence, read N- to C-terminus: Small ribosomal subunit protein uS15 (161 aa).

Residues 1–13 show a composition bias toward basic residues; that stretch reads MAGKRRKKGRSHS. Residues 1 to 22 form a disordered region; sequence MAGKRRKKGRSHSTRPATPTVP.

It belongs to the universal ribosomal protein uS15 family. In terms of assembly, part of the 30S ribosomal subunit.

The protein is Small ribosomal subunit protein uS15 of Hyperthermus butylicus (strain DSM 5456 / JCM 9403 / PLM1-5).